The sequence spans 222 residues: Large ribosomal subunit protein uL4 (222 aa).

A disordered region spans residues 50–72 (TRGRSEVSHSTKKPFRQKGTGNA).

This sequence belongs to the universal ribosomal protein uL4 family. Part of the 50S ribosomal subunit.

Its function is as follows. One of the primary rRNA binding proteins, this protein initially binds near the 5'-end of the 23S rRNA. It is important during the early stages of 50S assembly. It makes multiple contacts with different domains of the 23S rRNA in the assembled 50S subunit and ribosome. Forms part of the polypeptide exit tunnel. This chain is Large ribosomal subunit protein uL4, found in Chlamydia trachomatis serovar A (strain ATCC VR-571B / DSM 19440 / HAR-13).